The following is a 60-amino-acid chain: Metallothionein B (60 aa).

The interval methionine 1–cysteine 28 is beta. The a divalent metal cation site is built by cysteine 4, cysteine 6, cysteine 12, cysteine 14, cysteine 18, cysteine 20, cysteine 23, cysteine 25, cysteine 28, cysteine 32, cysteine 33, cysteine 35, cysteine 36, cysteine 40, cysteine 43, cysteine 47, cysteine 49, cysteine 54, cysteine 58, and cysteine 59. The interval lysine 29–glutamine 60 is alpha.

This sequence belongs to the metallothionein superfamily. Type 1 family.

In terms of biological role, metallothioneins have a high content of cysteine residues that bind various heavy metals. This chain is Metallothionein B (mtb), found in Dicentrarchus labrax (European seabass).